Here is a 226-residue protein sequence, read N- to C-terminus: Apoptosis regulator OPG045 (226 aa).

Residues 32–37 (NVDHDY) are essential and sufficient to inhibit host NLRP1.

Belongs to the orthopoxvirus OPG045 family. In terms of assembly, homodimer. Interacts with host pro-apoptotic protein BCL2L11 (via BH3 domain). Interacts with host NLRP1. Interacts with host BAK.

Its subcellular location is the host mitochondrion outer membrane. It localises to the host cytoplasm. In terms of biological role, plays a role in evading host innate immune response by inhibiting host inflammasome activation. Interacts with and inhibits NLR-mediated interleukin-1 beta/IL1B production in infected cells. At the host mitochondria outer membrane, interacts with the BH3 domain of host BAK and prevents BAK from binding active BAX. In turn, host apoptosis is inhibited. This chain is Apoptosis regulator OPG045 (OPG045), found in Vaccinia virus (strain Western Reserve) (VACV).